The primary structure comprises 272 residues: Shikimate dehydrogenase (NADP(+)) (272 aa).

Residues 14-16 and Thr-61 each bind shikimate; that span reads SKS. Catalysis depends on Lys-65, which acts as the Proton acceptor. Glu-77 contributes to the NADP(+) binding site. Residues Asn-86 and Asp-102 each coordinate shikimate. NADP(+)-binding positions include 126-130, 149-154, and Met-213; these read GAGGA and NRTVSR. Tyr-215 is a binding site for shikimate. Gly-237 contacts NADP(+).

The protein belongs to the shikimate dehydrogenase family. In terms of assembly, homodimer.

The catalysed reaction is shikimate + NADP(+) = 3-dehydroshikimate + NADPH + H(+). The protein operates within metabolic intermediate biosynthesis; chorismate biosynthesis; chorismate from D-erythrose 4-phosphate and phosphoenolpyruvate: step 4/7. Its function is as follows. Involved in the biosynthesis of the chorismate, which leads to the biosynthesis of aromatic amino acids. Catalyzes the reversible NADPH linked reduction of 3-dehydroshikimate (DHSA) to yield shikimate (SA). This Escherichia coli O6:K15:H31 (strain 536 / UPEC) protein is Shikimate dehydrogenase (NADP(+)).